Consider the following 188-residue polypeptide: uncharacterized protein (188 aa).

The chain crosses the membrane as a helical span at residues 121–139 (IWLYGGASLITTFINLGLV).

The protein to B.subtilis YwjB.

Its subcellular location is the membrane. This is an uncharacterized protein from Bacillus subtilis (strain 168).